Reading from the N-terminus, the 500-residue chain is MTIFDNYEVWFVIGSQHLYGPETLHQVTQHAEHVVNALNTEAKLPCKLVLKPLGTTPDEITAICRDANYDDRCAGLVVWLHTFSPAKMWINGLTMLNKPLLQFHTQFNAVLPWDSIDMDFMNLNQTAHGGREFGFIGARMRQQHAVVTGHWQDKQAHERIGSWMRQAVSKQDTRHLKVCRFGDNMREVAVTDGDKVAAQIKFGFSVNTWAVGDLVQVVNSISDGDVNALVDEYESSYTMTPATQIHGEKRQNVLEAARIELGMKRFLEQGGFHAFTTTFEDLHGLKQLPGLAVQRLMQQGYGFAGEGDWKTAALLRIMKVMSTGLQGGTSFMEDYTYHFEKGNDLVLGSHMLEVCPSIAAEEKPILDVQHLGIGGKDDPARLIFNTQTGPAIVASLIDLGDRYRLLVNCIDTVKTPYSLPKLPVANALWKAQPDLPTASEAWILAGGAHHTVFSHALNLNDMRQFAEMHDIEITVIDNDTRLPAFKDALRWNEVYYGFRR.

4 residues coordinate Mn(2+): glutamate 306, glutamate 333, histidine 350, and histidine 450.

This sequence belongs to the arabinose isomerase family. In terms of assembly, homohexamer. Requires Mn(2+) as cofactor.

It carries out the reaction beta-L-arabinopyranose = L-ribulose. It participates in carbohydrate degradation; L-arabinose degradation via L-ribulose; D-xylulose 5-phosphate from L-arabinose (bacterial route): step 1/3. In terms of biological role, catalyzes the conversion of L-arabinose to L-ribulose. The sequence is that of L-arabinose isomerase from Escherichia fergusonii (strain ATCC 35469 / DSM 13698 / CCUG 18766 / IAM 14443 / JCM 21226 / LMG 7866 / NBRC 102419 / NCTC 12128 / CDC 0568-73).